The primary structure comprises 539 residues: MWRVPRRLCVQSVKTSKLSGPWSRPAAHMSTLLIHHPQYAWLQDLGLREDNEGVYNGSWGGRGEVITTYCPANNEPIARVRQASLKDYEETIGKAKKAWNIWADIPAPKRGEIVRKIGDAFREKIQLLGRLVSLEMGKILVEGIGEVQEYVDVCDYAAGLSRMIGGPTLPSERPGHALIEMWNPLGLVGIITAFNFPVAVFGWNNAIALITGNVCLWKGAPTTSLVSVAVTKIIAQVLEDNLLPGAICSLVCGGADIGTTMARDERVNLLSFTGSTQVGKEVALMVQERFGKSLLELGGNNAIIAFEDADLSLVVPSVLFAAVGTAGQRCTTVRRLFLHESIHNEVVDRLRSAYSQIRVGNPWDPNILYGPLHTKQAVSMFVRAVEEAKKQGGTVVYGGKVMDHPGNYVEPTIVTGLAHDAPIVHQETFAPILYVFKFQDEEEVFEWNNEVKQGLSSSIFTKDLGRIFRWLGPKGSDCGIVNVNIPTSGAEIGGAFGGEKHTGGGRESGSDAWKQYMRRSTCTINYSTSLPLAQGIKFQ.

The transit peptide at 1-26 (MWRVPRRLCVQSVKTSKLSGPWSRPA) directs the protein to the mitochondrion. Residues Lys-86, Lys-94, and Lys-97 each carry the N6-acetyllysine; alternate modification. 3 positions are modified to N6-succinyllysine; alternate: Lys-86, Lys-94, and Lys-97. Residues 192 to 194 (TAF), Lys-218, 258 to 259 (GT), 274 to 275 (GS), 274 to 279 (GSTQVG), and 296 to 297 (EL) each bind NAD(+). Residue Glu-296 is the Proton acceptor of the active site. The active-site Nucleophile is Cys-330. Thr-331 is a (S)-2-amino-6-oxohexanoate binding site. Position 427 (Glu-427) interacts with NAD(+). Lys-462 is subject to N6-acetyllysine. (S)-2-amino-6-oxohexanoate-binding residues include Gly-489 and Ala-490. An N6-acetyllysine modification is found at Lys-500. The residue at position 537 (Lys-537) is an N6-succinyllysine.

It belongs to the aldehyde dehydrogenase family. In terms of assembly, homotetramer. In terms of tissue distribution, present in liver, kidney, brain and pancreas, and at lower levels in jejunum, duodenum, stomach and testes (at protein level).

It localises to the cytoplasm. The protein resides in the cytosol. Its subcellular location is the nucleus. It is found in the mitochondrion. It catalyses the reaction nonanal + NAD(+) + H2O = nonanoate + NADH + 2 H(+). The enzyme catalyses (S)-2-amino-6-oxohexanoate + NAD(+) + H2O = L-2-aminoadipate + NADH + 2 H(+). It carries out the reaction betaine aldehyde + NAD(+) + H2O = glycine betaine + NADH + 2 H(+). The catalysed reaction is an aldehyde + NAD(+) + H2O = a carboxylate + NADH + 2 H(+). It catalyses the reaction hexanal + NAD(+) + H2O = hexanoate + NADH + 2 H(+). The enzyme catalyses octanal + NAD(+) + H2O = octanoate + NADH + 2 H(+). It carries out the reaction (E)-non-2-enal + NAD(+) + H2O = (E)-non-2-enoate + NADH + 2 H(+). The catalysed reaction is (E)-4-hydroxynon-2-enal + NAD(+) + H2O = (E)-4-hydroxynon-2-enoate + NADH + 2 H(+). The protein operates within amine and polyamine biosynthesis; betaine biosynthesis via choline pathway; betaine from betaine aldehyde: step 1/1. In terms of biological role, multifunctional enzyme mediating important protective effects. Metabolizes betaine aldehyde to betaine, an important cellular osmolyte and methyl donor. Protects cells from oxidative stress by metabolizing a number of lipid peroxidation-derived aldehydes. Involved in lysine catabolism. The sequence is that of Alpha-aminoadipic semialdehyde dehydrogenase from Mus musculus (Mouse).